The following is a 574-amino-acid chain: Glycine--tRNA ligase (574 aa).

The substrate site is built by Arg-96 and Glu-162. Residues 194–196 (RNE), 204–209 (IRLREF), 327–328 (EC), and 450–453 (GIDR) each bind ATP. 209 to 213 (FTQAE) contributes to the substrate binding site. Residue 446 to 450 (EPSYG) participates in substrate binding.

Belongs to the class-II aminoacyl-tRNA synthetase family.

The protein localises to the cytoplasm. The enzyme catalyses tRNA(Gly) + glycine + ATP = glycyl-tRNA(Gly) + AMP + diphosphate. In terms of biological role, catalyzes the attachment of glycine to tRNA(Gly). This is Glycine--tRNA ligase from Methanococcus vannielii (strain ATCC 35089 / DSM 1224 / JCM 13029 / OCM 148 / SB).